The chain runs to 617 residues: Proline--tRNA ligase (617 aa).

It belongs to the class-II aminoacyl-tRNA synthetase family. ProS type 1 subfamily. As to quaternary structure, homodimer.

The protein localises to the cytoplasm. It catalyses the reaction tRNA(Pro) + L-proline + ATP = L-prolyl-tRNA(Pro) + AMP + diphosphate. Catalyzes the attachment of proline to tRNA(Pro) in a two-step reaction: proline is first activated by ATP to form Pro-AMP and then transferred to the acceptor end of tRNA(Pro). As ProRS can inadvertently accommodate and process non-cognate amino acids such as alanine and cysteine, to avoid such errors it has two additional distinct editing activities against alanine. One activity is designated as 'pretransfer' editing and involves the tRNA(Pro)-independent hydrolysis of activated Ala-AMP. The other activity is designated 'posttransfer' editing and involves deacylation of mischarged Ala-tRNA(Pro). The misacylated Cys-tRNA(Pro) is not edited by ProRS. This chain is Proline--tRNA ligase, found in Streptococcus pneumoniae (strain ATCC BAA-255 / R6).